We begin with the raw amino-acid sequence, 445 residues long: uncharacterized protein (445 aa).

Zn(2+) is bound at residue histidine 66. Catalysis depends on glutamate 69, which acts as the Proton acceptor. Residues histidine 70 and glutamate 146 each coordinate Zn(2+). The disordered stretch occupies residues 232–251 (GRQSAPPRKSTGRINGGPAL).

This sequence belongs to the peptidase M16 family. Zn(2+) is required as a cofactor.

This is an uncharacterized protein from Mycobacterium leprae (strain TN).